A 216-amino-acid chain; its full sequence is Ephrin-A1 (216 aa).

The signal sequence occupies residues 1–28 (MMELYRAAVQLIVGVGLGVGLWLREAQG). The 133-residue stretch at 29-161 (ERHIVFWNSS…RLRVHVSGRT (133 aa)) folds into the Ephrin RBD domain. The N-linked (GlcNAc...) asparagine glycan is linked to Asn-36. The cysteines at positions 61 and 102 are disulfide-linked. The tract at residues 162 to 181 (TPPPVNVHTPRSHIQSDEPE) is disordered. Ser-195 is lipidated: GPI-anchor amidated serine. A propeptide spans 196–216 (AAPGTPCTLYGLLLAALLLRL) (removed in mature form).

This sequence belongs to the ephrin family. As to quaternary structure, binds to the receptor tyrosine kinases EPHA2, EPHA4, EPHA5, EPHA6 and EPHA7. Also binds with low affinity to EPHA1.

The protein resides in the membrane. Functionally, cell surface GPI-bound ligand for Eph receptors, a family of receptor tyrosine kinases which are crucial for migration, repulsion and adhesion during neuronal, vascular and epithelial development. Binds promiscuously Eph receptors residing on adjacent cells, leading to contact-dependent bidirectional signaling into neighboring cells. The chain is Ephrin-A1 (efna1) from Xenopus laevis (African clawed frog).